Here is a 2067-residue protein sequence, read N- to C-terminus: Non-reducing polyketide synthase PKS12 (2067 aa).

The N-terminal acylcarrier protein transacylase (SAT) domain stretch occupies residues 4 to 241; the sequence is FVFGDQSTRF…LPVPIYAPYH (238 aa). The segment at 350 to 373 is disordered; sequence NSMGPKASTSHSSAETQTESSSKN. Polar residues predominate over residues 356-373; that stretch reads ASTSHSSAETQTESSSKN. Residues 373–808 enclose the Ketosynthase family 3 (KS3) domain; that stretch reads NSKIAIVAMS…GGNSAVLLQD (436 aa). Residues C545, H680, and H725 each act as for beta-ketoacyl synthase activity in the active site. The malonyl-CoA:ACP transacylase (MAT) domain stretch occupies residues 912 to 1199; the sequence is FVFSGQGAQY…VVCSTFLKSS (288 aa). S1001 functions as the For acyl/malonyl transferase activity in the catalytic mechanism. Residues 1297–1433 are N-terminal hotdog fold; the sequence is QKILQETSLD…CELRLEHPSQ (137 aa). The 310-residue stretch at 1297–1606 folds into the PKS/mFAS DH domain; it reads QKILQETSLD…FQGLPRRVLN (310 aa). The active-site Proton acceptor; for dehydratase activity is the H1329. The tract at residues 1329-1604 is product template (PT) domain; it reads HRVNGVKVCT…ITFQGLPRRV (276 aa). The C-terminal hotdog fold stretch occupies residues 1460 to 1606; sequence LDSMLATGMV…FQGLPRRVLN (147 aa). D1519 acts as the Proton donor; for dehydratase activity in catalysis. Residues 1619–1648 are disordered; sequence APMGRRDVPPSRMDVPPVRSGEGPPTSAPT. Positions 1660 to 1738 constitute a Carrier domain; the sequence is TSMDSRLRPL…SFKLFLGLVD (79 aa). S1698 bears the O-(pantetheine 4'-phosphoryl)serine mark. The tract at residues 1742–1779 is disordered; sequence KSSSGSDGSGRSSPAPGIESGATTPPMSEEDQDKIVSS. Residues 1743–1754 show a composition bias toward low complexity; the sequence is SSSGSDGSGRSS. Residues 1781–2065 are claisen cyclase domain; that stretch reads SLHQFQASST…YVSAFLARAL (285 aa). Catalysis depends on S1875, which acts as the For Claisen cyclase activity.

The catalysed reaction is 6 malonyl-CoA + acetyl-CoA + 6 H(+) = naphtopyrone YWA1 + 6 CO2 + 7 CoA + H2O. It participates in pigment biosynthesis. Functionally, non-reducing polyketide synthase; part of the gene cluster that mediates the biosynthesis of aurofusarin, a red mycelium pigment which is acting as a mycotoxin. The first step is performed by the polyketide synthase which condenses one acetyl-CoA and 6 malonyl-CoA units to form the first intermediate, the cyclic heptaketide and yellow pigment YWA1. The C2 hydroxyl group in the pyrone ring of YWA1 is probably formed during ring closure by an aldol-type cyclization reaction. The dehydratase aurZ then acts as the first tailoring enzyme in the aurofusarin biosynthetic pathway by converting YWA1 to nor-rubrofusarin. Nor-rubrofusarin is then methylated to rubrofusarin by the O-methyltransferase aurJ. Rubrofusarin is then transported across the plasma membrane by the rubrofusarin-specific pump aurT for further enzymatic processing by the extracellular complex composed of GIP1, aurF, aurO and aurS to yield aurofusarin. The polypeptide is Non-reducing polyketide synthase PKS12 (Gibberella zeae (strain ATCC MYA-4620 / CBS 123657 / FGSC 9075 / NRRL 31084 / PH-1) (Wheat head blight fungus)).